Here is a 235-residue protein sequence, read N- to C-terminus: Octanoyltransferase (235 aa).

The region spanning 37 to 220 (AGGPDTLLLL…AVNDALDGWL (184 aa)) is the BPL/LPL catalytic domain. Substrate contacts are provided by residues 78 to 85 (RGGKITWH), 150 to 152 (AIG), and 163 to 165 (GFA). Residue Cys-181 is the Acyl-thioester intermediate of the active site.

This sequence belongs to the LipB family.

It localises to the cytoplasm. The catalysed reaction is octanoyl-[ACP] + L-lysyl-[protein] = N(6)-octanoyl-L-lysyl-[protein] + holo-[ACP] + H(+). It participates in protein modification; protein lipoylation via endogenous pathway; protein N(6)-(lipoyl)lysine from octanoyl-[acyl-carrier-protein]: step 1/2. Catalyzes the transfer of endogenously produced octanoic acid from octanoyl-acyl-carrier-protein onto the lipoyl domains of lipoate-dependent enzymes. Lipoyl-ACP can also act as a substrate although octanoyl-ACP is likely to be the physiological substrate. The polypeptide is Octanoyltransferase (Mycobacterium leprae (strain Br4923)).